The following is a 96-amino-acid chain: MVGAYYVGIALLVAGGSQTAAGVDQYDLEQTPDNGFSRLLALDEMLRSRFLRKSRNPKDNLMLSEANEERTPSSPSNSLTEFIVSEPITTNVMRTE.

The N-terminal stretch at 1 to 22 is a signal peptide; the sequence is MVGAYYVGIALLVAGGSQTAAG. A RxLR-dEER motif is present at residues 49–70; the sequence is RFLRKSRNPKDNLMLSEANEER. The disordered stretch occupies residues 57-96; that stretch reads PKDNLMLSEANEERTPSSPSNSLTEFIVSEPITTNVMRTE. Residues 87–96 are compositionally biased toward polar residues; that stretch reads PITTNVMRTE.

Belongs to the RxLR effector family.

The protein localises to the secreted. The protein resides in the host nucleus. It localises to the host cytoplasm. In terms of biological role, secreted effector that dos not suppress the host cell death induced by cell death-inducing proteins. In Plasmopara viticola (Downy mildew of grapevine), this protein is Secreted RxLR effector protein 123.